The primary structure comprises 423 residues: tRNA(Ile)-lysidine synthase (423 aa).

Position 18-23 (18-23 (SGGADS)) interacts with ATP.

Belongs to the tRNA(Ile)-lysidine synthase family.

Its subcellular location is the cytoplasm. The catalysed reaction is cytidine(34) in tRNA(Ile2) + L-lysine + ATP = lysidine(34) in tRNA(Ile2) + AMP + diphosphate + H(+). Ligates lysine onto the cytidine present at position 34 of the AUA codon-specific tRNA(Ile) that contains the anticodon CAU, in an ATP-dependent manner. Cytidine is converted to lysidine, thus changing the amino acid specificity of the tRNA from methionine to isoleucine. The protein is tRNA(Ile)-lysidine synthase of Aromatoleum aromaticum (strain DSM 19018 / LMG 30748 / EbN1) (Azoarcus sp. (strain EbN1)).